We begin with the raw amino-acid sequence, 310 residues long: uncharacterized protein (310 aa).

Residue His-239 is part of the active site.

It belongs to the IUNH family.

Its subcellular location is the cytoplasm. The protein resides in the nucleus. This is an uncharacterized protein from Schizosaccharomyces pombe (strain 972 / ATCC 24843) (Fission yeast).